Here is a 963-residue protein sequence, read N- to C-terminus: Aminopeptidase N (963 aa).

The Cytoplasmic portion of the chain corresponds to 2 to 8 (AKGFYIS). A helical; Signal-anchor for type II membrane protein membrane pass occupies residues 9 to 32 (KALGILGILLGVAAVATIIALSVV). The interval 33 to 64 (YAQEKNKNAEHVPQAPTSPTITTTAAITLDQS) is cytosolic Ser/Thr-rich junction. The Extracellular segment spans residues 33-963 (YAQEKNKNAE…VVLNWFIEHS (931 aa)). The interval 65–963 (KPWNRYRLPT…VVLNWFIEHS (899 aa)) is metalloprotease. N-linked (GlcNAc...) asparagine glycans are attached at residues Asn-82 and Asn-124. Residue Tyr-171 is modified to Sulfotyrosine. 6 N-linked (GlcNAc...) asparagine glycosylation sites follow: Asn-229, Asn-237, Asn-258, Asn-286, Asn-314, and Asn-328. Position 347–351 (347–351 (GAMEN)) interacts with substrate. His-383 is a Zn(2+) binding site. Catalysis depends on Glu-384, which acts as the Proton acceptor. His-387 and Glu-406 together coordinate Zn(2+). Asn-506, Asn-556, Asn-569, Asn-622, Asn-646, and Asn-736 each carry an N-linked (GlcNAc...) asparagine glycan. The interval 717-813 (KYLRKQVEPL…DQWDFAWGQL (97 aa)) is interaction with TGEV spike glycoprotein. Disulfide bonds link Cys-758–Cys-765 and Cys-795–Cys-831.

This sequence belongs to the peptidase M1 family. As to quaternary structure, homodimer. Interacts with SLC6A19. (Microbial infection) Interacts with TGEV and PRCoV spike glycoprotein. Zn(2+) is required as a cofactor. Post-translationally, sulfated. N- and O-glycosylated. In terms of processing, may undergo proteolysis and give rise to a soluble form.

It localises to the cell membrane. The enzyme catalyses Release of an N-terminal amino acid, Xaa-|-Yaa- from a peptide, amide or arylamide. Xaa is preferably Ala, but may be most amino acids including Pro (slow action). When a terminal hydrophobic residue is followed by a prolyl residue, the two may be released as an intact Xaa-Pro dipeptide.. In terms of biological role, broad specificity aminopeptidase which plays a role in the final digestion of peptides generated from hydrolysis of proteins by gastric and pancreatic proteases. Also involved in the processing of various peptides including peptide hormones, such as angiotensin III and IV, neuropeptides, and chemokines. May also be involved the cleavage of peptides bound to major histocompatibility complex class II molecules of antigen presenting cells. May have a role in angiogenesis and promote cholesterol crystallization. It is able to degrade Leu-enkephalin and Met-enkephalin but not cholecystokinin CCK8, neuromedin C (GRP-10), somatostatin-14, substance P and vasoactive intestinal peptide. May have a role in amino acid transport by acting as binding partner of amino acid transporter SLC6A19 and regulating its activity. Functionally, (Microbial infection) In case of porcine transmissible gastroenteritis coronavirus (TGEV) and porcine respiratory coronavirus (PRCoV) infections, serves as a receptor for TGEV and PRCoV spike glycoprotein in a species-specific manner. The sequence is that of Aminopeptidase N (ANPEP) from Sus scrofa (Pig).